We begin with the raw amino-acid sequence, 251 residues long: Tachykinins (251 aa).

A signal peptide spans 1–21 (MGAPRTCLIFITIQLVSLAYA). Residues 22–25 (QEVS) constitute a propeptide that is removed on maturation. The residue at position 36 (arginine 36) is an Arginine amide. Positions 39 to 50 (KYFDEEGIEQFY) are excised as a propeptide. Lysine 61 carries the post-translational modification Lysine amide. Residues 65–163 (SLQDILEAPE…MEPEQSNDLD (99 aa)) constitute a propeptide that is removed on maturation. Arginine 176 carries the post-translational modification Arginine amide. The propeptide occupies 180 to 183 (SINN). Arginine 199 bears the Arginine amide mark. A propeptide spanning residues 203-223 (DLKNSNAHEIKFLVDQNGPLP) is cleaved from the precursor. The residue at position 235 (arginine 235) is an Arginine amide. Residues 239–251 (WTDEPSLEMDMPN) constitute a propeptide that is removed on maturation.

Belongs to the tachykinin family. Tachykinin-related peptide 1: Expressed in antennal lobe (AL) and gnathal ganglion (GNG) (at protein level). Expression in AL detected in all animals, in GNG in most animals (at protein level). Not expressed in corpora cardiaca (CC) and corpora allata (CA) (at protein level). Tachykinin-related peptide 2: Expressed in antennal lobe (AL) corpora cardiaca (CC) and corpora allata (CA) with expression detected in few animals (at protein level). Not expressed in gnathal ganglion (GNG) (at protein level). Tachykinin-related peptide 4: Expressed in corpora cardiaca (CC), corpora allata (CA), antennal lobe (AL) and gnathal ganglion (GNG) (at protein level). Expression in AL and GNG detected in most animals, in CC and CA detected in few animals (at protein level). Tachykinin-related peptide 5: Expressed in corpora cardiaca (CC), corpora allata (CA), antennal lobe (AL) and gnathal ganglion (GNG) (at protein level). Expression in CC and CA detected in some animals, in AL and GNG in few animals (at protein level). Tachykinin-related peptide 6: Expressed in antennal lobe (AL) and gnathal ganglion (GNG) (at protein level). Expression in AL detected in all animals, in GNG in some animals (at protein level). Not expressed in corpora cardiaca (CC) and corpora allata (CA) (at protein level).

Its subcellular location is the secreted. Functionally, tachykinins are active peptides which excite neurons, evoke behavioral responses, are potent vasodilators and secretagogues, and contract (directly or indirectly) many smooth muscles. The protein is Tachykinins of Agrotis ipsilon (Black cutworm moth).